A 362-amino-acid polypeptide reads, in one-letter code: N-alpha-acetyltransferase 30 (362 aa).

Residues 1 to 20 (MAEVPPGPSSLLPPPAPPAP) show a composition bias toward pro residues. 3 disordered regions span residues 1-26 (MAEVPPGPSSLLPPPAPPAPAAVEPR), 38-88 (CSED…NGLI), and 113-182 (ATTA…EEDE). A phosphoserine mark is found at S39 and S55. Over residues 39-48 (SEDEEDDEEH) the composition is skewed to acidic residues. Residue T117 is modified to Phosphothreonine. Residues 149-165 (AVPSPVEAAAASDPAAA) are compositionally biased toward low complexity. Residue S152 is modified to Phosphoserine. A compositionally biased stretch (acidic residues) spans 173-182 (TEQEEEEEDE). 3 positions are modified to phosphoserine: S190, S196, and S199. Positions 214–362 (RYVRYESELQ…DALRLKLWLR (149 aa)) constitute an N-acetyltransferase domain. At K233 the chain carries N6-acetyllysine.

This sequence belongs to the acetyltransferase family. MAK3 subfamily. As to quaternary structure, component of the N-terminal acetyltransferase C (NatC) complex, which is composed of NAA35, NAA38 and NAA30.

Its subcellular location is the cytoplasm. The protein resides in the nucleus. It carries out the reaction N-terminal L-methionyl-L-leucyl-[protein] + acetyl-CoA = N-terminal N(alpha)-acetyl-L-methionyl-L-leucyl-[protein] + CoA + H(+). The enzyme catalyses N-terminal L-methionyl-L-isoleucyl-[protein] + acetyl-CoA = N-terminal N(alpha)-acetyl-L-methionyl-L-isoleucyl-[protein] + CoA + H(+). It catalyses the reaction N-terminal L-methionyl-L-phenylalanyl-[protein] + acetyl-CoA = N-terminal N(alpha)-acetyl-L-methionyl-L-phenylalanyl-[protein] + CoA + H(+). The catalysed reaction is N-terminal L-methionyl-L-tryptophyl-[protein] + acetyl-CoA = N-terminal N(alpha)-acetyl-L-methionyl-L-tryptophyl-[protein] + CoA + H(+). It carries out the reaction N-terminal L-methionyl-L-tyrosyl-[protein] + acetyl-CoA = N-terminal N(alpha)-acetyl-L-methionyl-L-tyrosyl-[protein] + CoA + H(+). Catalytic subunit of the N-terminal acetyltransferase C (NatC) complex. Catalyzes acetylation of the N-terminal methionine residues of peptides beginning with Met-Leu-Ala and Met-Leu-Gly. N-terminal acetylation protects proteins from ubiquitination and degradation by the N-end rule pathway. Necessary for the lysosomal localization and function of ARL8B sugeesting that ARL8B is a NatC substrate. The protein is N-alpha-acetyltransferase 30 (NAA30) of Homo sapiens (Human).